We begin with the raw amino-acid sequence, 300 residues long: uncharacterized protein (300 aa).

Positions 1 to 22 (MKSFVWTLLGALSLGSLTTAYG) are cleaved as a signal peptide.

It localises to the endoplasmic reticulum. This is an uncharacterized protein from Schizosaccharomyces pombe (strain 972 / ATCC 24843) (Fission yeast).